Reading from the N-terminus, the 440-residue chain is Adenylosuccinate lyase (440 aa).

N(6)-(1,2-dicarboxyethyl)-AMP-binding positions include 4–5 (RY), 67–69 (KHD), and 93–94 (TS). The active-site Proton donor/acceptor is the His-141. Gln-212 contributes to the N(6)-(1,2-dicarboxyethyl)-AMP binding site. Ser-262 acts as the Proton donor/acceptor in catalysis. Residues Ser-263, 268–270 (KRN), Asn-276, and 307–311 (SVERF) each bind N(6)-(1,2-dicarboxyethyl)-AMP.

The protein belongs to the lyase 1 family. Adenylosuccinate lyase subfamily. Homotetramer. Residues from neighboring subunits contribute catalytic and substrate-binding residues to each active site.

It catalyses the reaction N(6)-(1,2-dicarboxyethyl)-AMP = fumarate + AMP. It carries out the reaction (2S)-2-[5-amino-1-(5-phospho-beta-D-ribosyl)imidazole-4-carboxamido]succinate = 5-amino-1-(5-phospho-beta-D-ribosyl)imidazole-4-carboxamide + fumarate. It functions in the pathway purine metabolism; AMP biosynthesis via de novo pathway; AMP from IMP: step 2/2. Its pathway is purine metabolism; IMP biosynthesis via de novo pathway; 5-amino-1-(5-phospho-D-ribosyl)imidazole-4-carboxamide from 5-amino-1-(5-phospho-D-ribosyl)imidazole-4-carboxylate: step 2/2. Functionally, catalyzes two reactions in de novo purine nucleotide biosynthesis. Catalyzes the breakdown of 5-aminoimidazole- (N-succinylocarboxamide) ribotide (SAICAR or 2-[5-amino-1-(5-phospho-beta-D-ribosyl)imidazole-4-carboxamido]succinate) to 5-aminoimidazole-4-carboxamide ribotide (AICAR or 5-amino-1-(5-phospho-beta-D-ribosyl)imidazole-4-carboxamide) and fumarate, and of adenylosuccinate (ADS or N(6)-(1,2-dicarboxyethyl)-AMP) to adenosine monophosphate (AMP) and fumarate. This chain is Adenylosuccinate lyase (purB), found in Helicobacter pylori (strain J99 / ATCC 700824) (Campylobacter pylori J99).